A 227-amino-acid polypeptide reads, in one-letter code: Cytochrome c oxidase subunit 2 (227 aa).

The Mitochondrial intermembrane portion of the chain corresponds to 1–26 (MATWSNFNLQNSASPLMEQIIFFHDH). Residues 27 to 51 (TLVILIMITILVGYLMISLFFNSYI) form a helical membrane-spanning segment. At 52–62 (NRFLLEGQMIE) the chain is on the mitochondrial matrix side. The chain crosses the membrane as a helical span at residues 63–81 (LIWTILPAITLIFIALPSL). The Mitochondrial intermembrane portion of the chain corresponds to 82-227 (RLLYLLDELN…NFINWINNYS (146 aa)). Residues His-161, Cys-196, Glu-198, Cys-200, His-204, and Met-207 each coordinate Cu cation. Glu-198 serves as a coordination point for Mg(2+).

This sequence belongs to the cytochrome c oxidase subunit 2 family. As to quaternary structure, component of the cytochrome c oxidase (complex IV, CIV), a multisubunit enzyme composed of a catalytic core of 3 subunits and several supernumerary subunits. The complex exists as a monomer or a dimer and forms supercomplexes (SCs) in the inner mitochondrial membrane with ubiquinol-cytochrome c oxidoreductase (cytochrome b-c1 complex, complex III, CIII). It depends on Cu cation as a cofactor.

Its subcellular location is the mitochondrion inner membrane. It carries out the reaction 4 Fe(II)-[cytochrome c] + O2 + 8 H(+)(in) = 4 Fe(III)-[cytochrome c] + 2 H2O + 4 H(+)(out). In terms of biological role, component of the cytochrome c oxidase, the last enzyme in the mitochondrial electron transport chain which drives oxidative phosphorylation. The respiratory chain contains 3 multisubunit complexes succinate dehydrogenase (complex II, CII), ubiquinol-cytochrome c oxidoreductase (cytochrome b-c1 complex, complex III, CIII) and cytochrome c oxidase (complex IV, CIV), that cooperate to transfer electrons derived from NADH and succinate to molecular oxygen, creating an electrochemical gradient over the inner membrane that drives transmembrane transport and the ATP synthase. Cytochrome c oxidase is the component of the respiratory chain that catalyzes the reduction of oxygen to water. Electrons originating from reduced cytochrome c in the intermembrane space (IMS) are transferred via the dinuclear copper A center (CU(A)) of subunit 2 and heme A of subunit 1 to the active site in subunit 1, a binuclear center (BNC) formed by heme A3 and copper B (CU(B)). The BNC reduces molecular oxygen to 2 water molecules using 4 electrons from cytochrome c in the IMS and 4 protons from the mitochondrial matrix. This is Cytochrome c oxidase subunit 2 (COII) from Choristoneura rosaceana (Oblique banded leafroller).